We begin with the raw amino-acid sequence, 201 residues long: Orotate phosphoribosyltransferase (201 aa).

5-phospho-alpha-D-ribose 1-diphosphate is bound at residue E113–S121. Orotate contacts are provided by T117 and R145.

Belongs to the purine/pyrimidine phosphoribosyltransferase family. PyrE subfamily. As to quaternary structure, homodimer. It depends on Mg(2+) as a cofactor.

The catalysed reaction is orotidine 5'-phosphate + diphosphate = orotate + 5-phospho-alpha-D-ribose 1-diphosphate. It functions in the pathway pyrimidine metabolism; UMP biosynthesis via de novo pathway; UMP from orotate: step 1/2. Functionally, catalyzes the transfer of a ribosyl phosphate group from 5-phosphoribose 1-diphosphate to orotate, leading to the formation of orotidine monophosphate (OMP). This chain is Orotate phosphoribosyltransferase, found in Helicobacter acinonychis (strain Sheeba).